The sequence spans 267 residues: Membrane-spanning 4-domains subfamily A member 10 (267 aa).

At 1 to 56 (MAGQAPTAVPGSVTGEVSRWQNLGPAQPAQKVAQPQNLVPDGHLEKALEGSDLLQK) the chain is on the cytoplasmic side. A helical transmembrane segment spans residues 57 to 77 (LGGFHIAIAFAHLAFGGYLIS). Residues 78-83 (TVKNLH) lie on the Extracellular side of the membrane. A helical membrane pass occupies residues 84-104 (LVVLKCWYPLWGTVSFLVAGM). Residues 105-118 (AAMTTVTFPKTSLK) lie on the Cytoplasmic side of the membrane. The helical transmembrane segment at 119-139 (VLCVIANVISLFCALAGFFVI) threads the bilayer. Topologically, residues 140–168 (AKDLFLEGPFPWPIWRPYPEPTTYIQRLE) are extracellular. Residues 169 to 189 (LTLFCFTFLEIFLSGSTAITA) form a helical membrane-spanning segment. At 190 to 267 (YRMKRLQAED…LHTGPRTLRK (78 aa)) the chain is on the cytoplasmic side.

This sequence belongs to the MS4A family. Expressed in thymus, kidney, colon, brain and testis. Expressed also by various hematopoietic and lymphoblastoid cell lines.

It localises to the membrane. Its function is as follows. May be involved in signal transduction as a component of a multimeric receptor complex. This Mus musculus (Mouse) protein is Membrane-spanning 4-domains subfamily A member 10 (Ms4a10).